We begin with the raw amino-acid sequence, 432 residues long: Trigger factor (432 aa).

Residues 161-246 (EDRVTIDFTG…LKKVEERELP (86 aa)) form the PPIase FKBP-type domain.

It belongs to the FKBP-type PPIase family. Tig subfamily. As to quaternary structure, homodimer and monomer. In vivo most of the ribosomes are in complex with monomeric TF. Uncomplexed TF, however, is in a monomer-dimer equilibrium with approximately two thirds of TF existing in a dimeric state.

The protein resides in the cytoplasm. It catalyses the reaction [protein]-peptidylproline (omega=180) = [protein]-peptidylproline (omega=0). Functionally, involved in protein export. Acts as a chaperone by maintaining the newly synthesized protein in an open conformation. Functions as a peptidyl-prolyl cis-trans isomerase. In Escherichia coli O139:H28 (strain E24377A / ETEC), this protein is Trigger factor.